The sequence spans 329 residues: MAGKLMHALQYNSYGGGAAGLEHVQVPVPTPKSNEVCLKLEATSLNPVDWKIQKGMIRPFLPRKFPCIPATDVAGEVVEVGSGVKNFKAGDKVVAVLSHLGGGGLAEFAVATEKLTVKRPQEVGAAEAAALPVAGLTALQALTNPAGLKLDGTGKKANILVTAASGGVGHYAVQLAKLANAHVTATCGARNIEFVKSLGADEVLDYKTPEGAALKSPSGKKYDAVVHCANGIPFSVFEPNLSENGKVIDITPGPNAMWTYAVKKITMSKKQLVPLLLIPKAENLEFMVNLVKEGKVKTVIDSKHPLSKAEDAWAKSIDGHATGKIIVEP.

Arg58 contributes to the substrate binding site.

It belongs to the zinc-containing alcohol dehydrogenase family. Quinone oxidoreductase subfamily. In terms of assembly, homodimer or homotetramer. Transition to monomer upon NADPH binding. Interacts with calmodulin. Interacts with HP30-1, HP30-2 and HP20.

The protein localises to the plastid. It is found in the chloroplast inner membrane. NADPH-dependent alpha,beta-unsaturated oxoene reductase reducing the double bond of medium-chain (C9) to long-chain (C18) reactive electrophile species deriving from poly-unsaturated fatty acid peroxides. The best substrates are 13-lipoxygenase-derived gamma-ketols, but is unable to reduce the double bond of short-chain alkenals and alkenones such as acrolein, crotonaldehyde, 3-buten-2-one, 4-hexen-3-one and trans-2-hexenal, or quinones such as duroquinone, decylubiquinone, coenzyme Q0, menadione, menaquinone and phylloquinone. Can use trans-2-nonenal, trans-3-decen-2-one, 4-hydroxynonenal, 12-oxo-10(E) dodecanoate (traumatin), 4-oxononenal, trans-1,3 diphenyl-2-propenone, trans-1,4-diphenyl-2-butene-1,4-dione, 9-oxo-12,13-epoxy-(10E)-octadecenoic acid (trans-EKODE-1b), 9-hydroxy-12-oxo-10(E)-octadecenoic acid, 9-Hydroxy-12-oxo-10(E),15(Z)-octadecadienoic acid and 9,13-dihydroxy-10-oxo-11-octadecenoic acid as substrates, but has no activity with 13(R,S)-hydroperoxy-9(Z),11(E)-octadecadienoic acid (13-HPOD), 9(S),12(S),13(S)-trihydroxy-10(E)-octadecenoic acid, 13-hydroxy-12-oxo-9(Z)-octadecenoic acid, 9-oxo-10(E),12(Z)-octadecadienoic acid (9-KODE), 13-oxo-9(Z),11(E)-octadecadienoic acid (13-KODE) and 12-oxo-10,15(Z)-phytodienoic acid (12-OPDA). The protein is Chloroplast envelope quinone oxidoreductase homolog of Arabidopsis thaliana (Mouse-ear cress).